We begin with the raw amino-acid sequence, 388 residues long: Protein YnjB (388 aa).

Residues A333–R357 form a disordered region.

This chain is Protein YnjB (ynjB), found in Escherichia coli (strain K12).